A 60-amino-acid polypeptide reads, in one-letter code: UPF0434 protein mma_2578 (60 aa).

The protein belongs to the UPF0434 family.

This is UPF0434 protein mma_2578 from Janthinobacterium sp. (strain Marseille) (Minibacterium massiliensis).